The chain runs to 329 residues: Eukaryotic translation initiation factor 2 subunit 1 (329 aa).

In terms of domain architecture, S1 motif spans Asp24–Arg95. Ser59 is modified (phosphoserine; by eIK1, eIK2 and PK4). Positions Leu291–Asp329 are disordered. A compositionally biased stretch (acidic residues) spans Ser298–Asp329.

Belongs to the eIF-2-alpha family. Phosphorylated at Ser-59 by eIK1 in response to amino acid starvation. Phosphorylates at Ser-59 in schizonts and gametocytes but not in rings and young trophozoites. Phosphorylates at Ser-59 by eIK2 in salivary gland sporozoites but not in midgut and hemocoel sporozoites. Dephosphorylated at Ser-59 by UIS2. Phosphorylation of eIF2alpha subunit of the pre-initiation complex eIF2 inhibits recycling of inactive eIF2-GDP to active eIF2-GTP by limiting the activity of the guanine nucleotide exchange factor eIF2B and thus, inhibits protein translation.

Its subcellular location is the cytoplasm. It localises to the stress granule. Functions in the early steps of protein synthesis by forming a ternary complex with GTP and initiator tRNA. May regulate protein translation in response to amino acid starvation. May regulate protein at various stages of parasite development. The sequence is that of Eukaryotic translation initiation factor 2 subunit 1 from Plasmodium falciparum (isolate 3D7).